The chain runs to 493 residues: EGF-containing fibulin-like extracellular matrix protein 1 (493 aa).

An N-terminal signal peptide occupies residues 1-17; it reads MLQTVFLTMLTLALVKS. The EGF-like 1; atypical domain occupies 26–71; that stretch reads YTQCTDGYEWDPVRQQCKDIDECDIVPDACKGGMKCVNHYGGYLCL. Positions 173 to 213 constitute an EGF-like 2; calcium-binding domain; that stretch reads DIDECTSGTHNCRLDQVCINLRGSFTCHCLPGYQKRGEQCV. 15 disulfides stabilise this stretch: Cys177-Cys190, Cys184-Cys199, Cys201-Cys212, Cys218-Cys228, Cys224-Cys237, Cys239-Cys252, Cys258-Cys268, Cys264-Cys277, Cys279-Cys292, Cys298-Cys309, Cys305-Cys318, Cys320-Cys332, Cys338-Cys350, Cys344-Cys359, and Cys365-Cys377. The EGF-like 3; calcium-binding domain occupies 214-253; the sequence is DIDECSVPPYCHQGCVNTPGSFYCQCNPGFQLAANNYTCV. A glycan (N-linked (GlcNAc...) asparagine) is linked at Asn249. Residues 254–293 enclose the EGF-like 4; calcium-binding domain; that stretch reads DINECDASNQCAQQCYNILGSFICQCNQGYELSSDRLNCE. Positions 259 to 493 are mediates interaction with TIMP3; that stretch reads DASNQCAQQC…LTIIVGPFSF (235 aa). An EGF-like 5; calcium-binding domain is found at 294–333; it reads DIDECRTSSYLCQYQCVNEPGKFSCMCPQGYQVVRSRTCQ. Residues 334 to 378 enclose the EGF-like 6; calcium-binding domain; sequence DINECETTNECREDEMCWNYHGGFRCYPQNPCQDPYVLTSENRCV.

Belongs to the fibulin family. As to quaternary structure, interacts with ECM1. Interacts with TIMP3. In terms of tissue distribution, expressed by olfactory ensheathing cells (at protein level). Detected in lung, intestine and kidney.

It localises to the secreted. It is found in the extracellular space. Its subcellular location is the extracellular matrix. In terms of biological role, binds EGFR, the EGF receptor, inducing EGFR autophosphorylation and the activation of downstream signaling pathways. May play a role in cell adhesion and migration. May function as a negative regulator of chondrocyte differentiation. In the olfactory epithelium, it may regulate glial cell migration, differentiation and the ability of glial cells to support neuronal neurite outgrowth. This is EGF-containing fibulin-like extracellular matrix protein 1 (Efemp1) from Rattus norvegicus (Rat).